The following is a 481-amino-acid chain: Argininosuccinate lyase (481 aa).

It belongs to the lyase 1 family. Argininosuccinate lyase subfamily.

The protein localises to the cytoplasm. The enzyme catalyses 2-(N(omega)-L-arginino)succinate = fumarate + L-arginine. It functions in the pathway amino-acid biosynthesis; L-arginine biosynthesis; L-arginine from L-ornithine and carbamoyl phosphate: step 3/3. This is Argininosuccinate lyase from Methanococcus maripaludis (strain C6 / ATCC BAA-1332).